The chain runs to 261 residues: Indole-3-glycerol phosphate synthase (261 aa).

Belongs to the TrpC family.

It catalyses the reaction 1-(2-carboxyphenylamino)-1-deoxy-D-ribulose 5-phosphate + H(+) = (1S,2R)-1-C-(indol-3-yl)glycerol 3-phosphate + CO2 + H2O. It functions in the pathway amino-acid biosynthesis; L-tryptophan biosynthesis; L-tryptophan from chorismate: step 4/5. The sequence is that of Indole-3-glycerol phosphate synthase (trpC) from Aeropyrum pernix (strain ATCC 700893 / DSM 11879 / JCM 9820 / NBRC 100138 / K1).